The following is a 363-amino-acid chain: Cellular tumor antigen p53 (363 aa).

Positions 1–29 (MEPSSETGMDPPLSQETFEDLWSLLPDPL) are transcription activation (acidic). A DNA-binding region spans residues 76-267 (DYAGKYGLQL…RTEEDNYTKK (192 aa)). Residues cysteine 150, histidine 153, cysteine 213, and cysteine 217 each contribute to the Zn(2+) site. Residues 248–255 (RVCACPGR) form an interaction with DNA region. The tract at residues 257-290 (RRTEEDNYTKKRGLKPSGKRELAHPPSSEPPLPK) is disordered. A Bipartite nuclear localization signal motif is present at residues 275-292 (KRELAHPPSSEPPLPKKR). The segment at 300 to 331 (EEIFTLRIKGRSRYEMIKKLNDALELQESLDQ) is oligomerization. The Nuclear export signal signature appears at 314-325 (EMIKKLNDALEL). Positions 344-356 (EIKPKKGKKLLVK) are basic (repression of DNA-binding).

Belongs to the p53 family. As to quaternary structure, binds DNA as a homotetramer. It depends on Zn(2+) as a cofactor. In terms of tissue distribution, ubiquitous.

It is found in the cytoplasm. The protein localises to the nucleus. Multifunctional transcription factor that induces cell cycle arrest, DNA repair or apoptosis upon binding to its target DNA sequence. Acts as a tumor suppressor in many tumor types; induces growth arrest or apoptosis depending on the physiological circumstances and cell type. Negatively regulates cell division by controlling expression of a set of genes required for this process. One of the activated genes is an inhibitor of cyclin-dependent kinases. Apoptosis induction seems to be mediated either by stimulation of BAX and FAS antigen expression, or by repression of Bcl-2 expression. In Xenopus laevis (African clawed frog), this protein is Cellular tumor antigen p53 (tp53).